We begin with the raw amino-acid sequence, 131 residues long: Holo-[acyl-carrier-protein] synthase (131 aa).

The Mg(2+) site is built by Asp-8 and Glu-58.

The protein belongs to the P-Pant transferase superfamily. AcpS family. The cofactor is Mg(2+).

Its subcellular location is the cytoplasm. The catalysed reaction is apo-[ACP] + CoA = holo-[ACP] + adenosine 3',5'-bisphosphate + H(+). Its function is as follows. Transfers the 4'-phosphopantetheine moiety from coenzyme A to a Ser of acyl-carrier-protein. This Oenococcus oeni (strain ATCC BAA-331 / PSU-1) protein is Holo-[acyl-carrier-protein] synthase.